Here is a 141-residue protein sequence, read N- to C-terminus: MNNNNNNNNNNNNNNNNNNNNNNNNNSYDSNHSSSSYTSENQNREQQFVFIPEEELERQSLLKKKDNLSYSINKDEIIIINNEDENDQNQTKDSTNPIVLRAKKVVDSFFCKIILVFICLVAIYSLVVIKCDGFHFNHCSP.

A compositionally biased stretch (low complexity) spans 1–39 (MNNNNNNNNNNNNNNNNNNNNNNNNNSYDSNHSSSSYTS). Residues 1 to 48 (MNNNNNNNNNNNNNNNNNNNNNNNNNSYDSNHSSSSYTSENQNREQQF) form a disordered region. The chain crosses the membrane as a helical span at residues 109–129 (FFCKIILVFICLVAIYSLVVI).

The protein resides in the membrane. This is an uncharacterized protein from Dictyostelium discoideum (Social amoeba).